Reading from the N-terminus, the 156-residue chain is Ribonuclease pancreatic (156 aa).

The signal sequence occupies residues 1 to 28 (MALEKSLVLLPLFVLMLLVLGWVQPSLG). 2 residues coordinate substrate: Lys-35 and Arg-38. His-40 functions as the Proton acceptor in the catalytic mechanism. 2 N-linked (GlcNAc...) asparagine glycosylation sites follow: Asn-50 and Asn-62. Intrachain disulfides connect Cys-54–Cys-112, Cys-68–Cys-123, Cys-86–Cys-138, and Cys-93–Cys-100. Residues 69–73 (KPVNT) and Lys-94 each bind substrate. Asn-104 is a glycosylation site (N-linked (GlcNAc...) asparagine). Residue Arg-113 participates in substrate binding. N-linked (GlcNAc...) asparagine glycosylation is present at Asn-116. The active-site Proton donor is His-147.

This sequence belongs to the pancreatic ribonuclease family. As to quaternary structure, monomer. Interacts with and forms tight 1:1 complexes with RNH1. Dimerization of two such complexes may occur. Interaction with RNH1 inhibits this protein.

It localises to the secreted. It carries out the reaction an [RNA] containing cytidine + H2O = an [RNA]-3'-cytidine-3'-phosphate + a 5'-hydroxy-ribonucleotide-3'-[RNA].. The catalysed reaction is an [RNA] containing uridine + H2O = an [RNA]-3'-uridine-3'-phosphate + a 5'-hydroxy-ribonucleotide-3'-[RNA].. Endonuclease that catalyzes the cleavage of RNA on the 3' side of pyrimidine nucleotides. Acts on single-stranded and double-stranded RNA. The chain is Ribonuclease pancreatic (RNASE1) from Nomascus leucogenys (Northern white-cheeked gibbon).